The following is an 876-amino-acid chain: Alanine--tRNA ligase (876 aa).

The Zn(2+) site is built by His568, His572, Cys670, and His674.

This sequence belongs to the class-II aminoacyl-tRNA synthetase family. Requires Zn(2+) as cofactor.

It is found in the cytoplasm. The catalysed reaction is tRNA(Ala) + L-alanine + ATP = L-alanyl-tRNA(Ala) + AMP + diphosphate. Its function is as follows. Catalyzes the attachment of alanine to tRNA(Ala) in a two-step reaction: alanine is first activated by ATP to form Ala-AMP and then transferred to the acceptor end of tRNA(Ala). Also edits incorrectly charged Ser-tRNA(Ala) and Gly-tRNA(Ala) via its editing domain. This chain is Alanine--tRNA ligase, found in Geotalea uraniireducens (strain Rf4) (Geobacter uraniireducens).